Reading from the N-terminus, the 398-residue chain is Succinate--CoA ligase [ADP-forming] subunit beta (398 aa).

The ATP-grasp domain maps to 9–254 (KRLLHEYGAP…ISEEDPKEIE (246 aa)). Residues K46, 53-55 (GRG), E109, A112, and E117 contribute to the ATP site. Mg(2+) contacts are provided by N209 and D223. Residues N274 and 331 to 333 (GIM) contribute to the substrate site.

This sequence belongs to the succinate/malate CoA ligase beta subunit family. In terms of assembly, heterotetramer of two alpha and two beta subunits. It depends on Mg(2+) as a cofactor.

The enzyme catalyses succinate + ATP + CoA = succinyl-CoA + ADP + phosphate. It catalyses the reaction GTP + succinate + CoA = succinyl-CoA + GDP + phosphate. It functions in the pathway carbohydrate metabolism; tricarboxylic acid cycle; succinate from succinyl-CoA (ligase route): step 1/1. Its function is as follows. Succinyl-CoA synthetase functions in the citric acid cycle (TCA), coupling the hydrolysis of succinyl-CoA to the synthesis of either ATP or GTP and thus represents the only step of substrate-level phosphorylation in the TCA. The beta subunit provides nucleotide specificity of the enzyme and binds the substrate succinate, while the binding sites for coenzyme A and phosphate are found in the alpha subunit. This Bartonella bacilliformis (strain ATCC 35685 / KC583 / Herrer 020/F12,63) protein is Succinate--CoA ligase [ADP-forming] subunit beta.